Reading from the N-terminus, the 78-residue chain is Small venom protein 2 (78 aa).

An N-terminal signal peptide occupies residues 1 to 19; that stretch reads MKFIVLLGALLALLVAVSA. The propeptide occupies 20–42; it reads DRIAREAPEMESVDEAVLTRQAR.

As to expression, expressed by the venom gland.

Its subcellular location is the secreted. The polypeptide is Small venom protein 2 (Pimpla hypochondriaca (Parasitoid wasp)).